The sequence spans 339 residues: Uroporphyrinogen decarboxylase (339 aa).

Residues 21–25 (RQAGR), aspartate 71, tyrosine 146, serine 201, and histidine 316 contribute to the substrate site.

The protein belongs to the uroporphyrinogen decarboxylase family. In terms of assembly, homodimer.

Its subcellular location is the cytoplasm. The enzyme catalyses uroporphyrinogen III + 4 H(+) = coproporphyrinogen III + 4 CO2. Its pathway is porphyrin-containing compound metabolism; protoporphyrin-IX biosynthesis; coproporphyrinogen-III from 5-aminolevulinate: step 4/4. Functionally, catalyzes the decarboxylation of four acetate groups of uroporphyrinogen-III to yield coproporphyrinogen-III. This Rickettsia canadensis (strain McKiel) protein is Uroporphyrinogen decarboxylase.